A 298-amino-acid polypeptide reads, in one-letter code: Protease HtpX homolog (298 aa).

2 helical membrane-spanning segments follow: residues 14–34 and 39–59; these read VVLL…AGYL and YAMG…SMIF. Histidine 143 is a Zn(2+) binding site. Glutamate 144 is an active-site residue. Histidine 147 is a Zn(2+) binding site. 2 helical membrane passes run 158–178 and 197–217; these read IAVA…RMLW and IITL…ASLI. Glutamate 226 is a binding site for Zn(2+).

The protein belongs to the peptidase M48B family. Zn(2+) is required as a cofactor.

It is found in the cell membrane. This is Protease HtpX homolog from Streptococcus pyogenes serotype M3 (strain SSI-1).